Reading from the N-terminus, the 171-residue chain is MTFTSDSASTRFSQAFGIQTGDAVASTITVFQALSIDDQLAVLWYAYTEMGRSITPAATGAARLQLAEGLLNQIKQMSHAEQLQVMRDLAAKNNTQVSRSYGILSNNTKLAFWYELSELMVKGFVVPVPTDYKISRDGSQVLEALKGLDFGQQITVLRKVVADMGVDPLAD.

Residues 21–171 form the OCP N-terminal domain; it reads GDAVASTITV…ADMGVDPLAD (151 aa).

Belongs to the orange carotenoid-binding protein family. 3'-hydroxyechinenone is required as a cofactor.

Its subcellular location is the cellular thylakoid membrane. Functionally, might act as a photo-protectant, protecting against damage induced by excess light via a process known as non-photochemical quenching (NPQ). The chain is Orange carotenoid-binding domain-containing protein from Nostoc sp. (strain PCC 7120 / SAG 25.82 / UTEX 2576).